The primary structure comprises 670 residues: DNA ligase (670 aa).

NAD(+) contacts are provided by residues 33-37, 82-83, and Glu-114; these read DVEYD and SL. Lys-116 serves as the catalytic N6-AMP-lysine intermediate. The NAD(+) site is built by Arg-137, Glu-174, Lys-291, and Lys-315. Zn(2+)-binding residues include Cys-409, Cys-412, Cys-427, and Cys-433. Positions 593-670 constitute a BRCT domain; it reads DQELPLEGKV…TEEDLIALIS (78 aa).

The protein belongs to the NAD-dependent DNA ligase family. LigA subfamily. Requires Mg(2+) as cofactor. The cofactor is Mn(2+).

The enzyme catalyses NAD(+) + (deoxyribonucleotide)n-3'-hydroxyl + 5'-phospho-(deoxyribonucleotide)m = (deoxyribonucleotide)n+m + AMP + beta-nicotinamide D-nucleotide.. DNA ligase that catalyzes the formation of phosphodiester linkages between 5'-phosphoryl and 3'-hydroxyl groups in double-stranded DNA using NAD as a coenzyme and as the energy source for the reaction. It is essential for DNA replication and repair of damaged DNA. This Vibrio atlanticus (strain LGP32) (Vibrio splendidus (strain Mel32)) protein is DNA ligase.